A 303-amino-acid chain; its full sequence is Glutamyl-Q tRNA(Asp) synthetase (303 aa).

Residues 16-20 and glutamate 52 each bind L-glutamate; that span reads RFAPS. The 'HIGH' region motif lies at 19 to 29; the sequence is PSPSGPLHFGS. Zn(2+) contacts are provided by cysteine 108, cysteine 110, tyrosine 122, and cysteine 126. 2 residues coordinate L-glutamate: tyrosine 177 and arginine 195. The 'KMSKS' region motif lies at 233–237; it reads KLSKQ. Lysine 236 contributes to the ATP binding site.

Belongs to the class-I aminoacyl-tRNA synthetase family. GluQ subfamily. The cofactor is Zn(2+).

Its function is as follows. Catalyzes the tRNA-independent activation of glutamate in presence of ATP and the subsequent transfer of glutamate onto a tRNA(Asp). Glutamate is transferred on the 2-amino-5-(4,5-dihydroxy-2-cyclopenten-1-yl) moiety of the queuosine in the wobble position of the QUC anticodon. In Vibrio vulnificus (strain YJ016), this protein is Glutamyl-Q tRNA(Asp) synthetase.